Here is a 388-residue protein sequence, read N- to C-terminus: Chorismate synthase (388 aa).

Arginine 39 and arginine 45 together coordinate NADP(+). Residues 130-132 (RSS), 251-252 (NA), glycine 296, 311-315 (KPIPT), and arginine 337 contribute to the FMN site.

The protein belongs to the chorismate synthase family. Homotetramer. FMNH2 is required as a cofactor.

The enzyme catalyses 5-O-(1-carboxyvinyl)-3-phosphoshikimate = chorismate + phosphate. It participates in metabolic intermediate biosynthesis; chorismate biosynthesis; chorismate from D-erythrose 4-phosphate and phosphoenolpyruvate: step 7/7. In terms of biological role, catalyzes the anti-1,4-elimination of the C-3 phosphate and the C-6 proR hydrogen from 5-enolpyruvylshikimate-3-phosphate (EPSP) to yield chorismate, which is the branch point compound that serves as the starting substrate for the three terminal pathways of aromatic amino acid biosynthesis. This reaction introduces a second double bond into the aromatic ring system. This is Chorismate synthase from Lactococcus lactis subsp. lactis (strain IL1403) (Streptococcus lactis).